We begin with the raw amino-acid sequence, 131 residues long: Small ribosomal subunit protein uS8 (131 aa).

The protein belongs to the universal ribosomal protein uS8 family. In terms of assembly, part of the 30S ribosomal subunit. Contacts proteins S5 and S12.

Its function is as follows. One of the primary rRNA binding proteins, it binds directly to 16S rRNA central domain where it helps coordinate assembly of the platform of the 30S subunit. The sequence is that of Small ribosomal subunit protein uS8 from Nautilia profundicola (strain ATCC BAA-1463 / DSM 18972 / AmH).